The chain runs to 518 residues: Protein nucleotidyltransferase YdiU (518 aa).

Residues 1–10 show a composition bias toward basic and acidic residues; sequence MTHLQFDNRL. The tract at residues 1–23 is disordered; sequence MTHLQFDNRLRAQLPGDPEQGPR. 8 residues coordinate ATP: Gly100, Gly102, Arg103, Lys123, Asp135, Gly136, Arg193, and Arg200. Asp270 functions as the Proton acceptor in the catalytic mechanism. Residues Asn271 and Asp280 each contribute to the Mg(2+) site. Asp280 serves as a coordination point for ATP.

It belongs to the SELO family. It depends on Mg(2+) as a cofactor. Requires Mn(2+) as cofactor.

It catalyses the reaction L-seryl-[protein] + ATP = 3-O-(5'-adenylyl)-L-seryl-[protein] + diphosphate. The enzyme catalyses L-threonyl-[protein] + ATP = 3-O-(5'-adenylyl)-L-threonyl-[protein] + diphosphate. The catalysed reaction is L-tyrosyl-[protein] + ATP = O-(5'-adenylyl)-L-tyrosyl-[protein] + diphosphate. It carries out the reaction L-histidyl-[protein] + UTP = N(tele)-(5'-uridylyl)-L-histidyl-[protein] + diphosphate. It catalyses the reaction L-seryl-[protein] + UTP = O-(5'-uridylyl)-L-seryl-[protein] + diphosphate. The enzyme catalyses L-tyrosyl-[protein] + UTP = O-(5'-uridylyl)-L-tyrosyl-[protein] + diphosphate. Nucleotidyltransferase involved in the post-translational modification of proteins. It can catalyze the addition of adenosine monophosphate (AMP) or uridine monophosphate (UMP) to a protein, resulting in modifications known as AMPylation and UMPylation. In Xanthomonas campestris pv. campestris (strain B100), this protein is Protein nucleotidyltransferase YdiU.